The sequence spans 631 residues: Phosphomethylpyrimidine synthase (631 aa).

Residues N239, M268, Y297, H333, 353 to 355, 394 to 397, and E433 each bind substrate; these read SRG and DGLR. H437 is a binding site for Zn(2+). Y460 is a binding site for substrate. Residue H501 coordinates Zn(2+). Positions 581, 584, and 589 each coordinate [4Fe-4S] cluster.

It belongs to the ThiC family. As to quaternary structure, homodimer. [4Fe-4S] cluster is required as a cofactor.

The enzyme catalyses 5-amino-1-(5-phospho-beta-D-ribosyl)imidazole + S-adenosyl-L-methionine = 4-amino-2-methyl-5-(phosphooxymethyl)pyrimidine + CO + 5'-deoxyadenosine + formate + L-methionine + 3 H(+). It participates in cofactor biosynthesis; thiamine diphosphate biosynthesis. In terms of biological role, catalyzes the synthesis of the hydroxymethylpyrimidine phosphate (HMP-P) moiety of thiamine from aminoimidazole ribotide (AIR) in a radical S-adenosyl-L-methionine (SAM)-dependent reaction. The polypeptide is Phosphomethylpyrimidine synthase (Escherichia coli O127:H6 (strain E2348/69 / EPEC)).